A 165-amino-acid chain; its full sequence is Large ribosomal subunit protein uL10 (165 aa).

It belongs to the universal ribosomal protein uL10 family. In terms of assembly, part of the ribosomal stalk of the 50S ribosomal subunit. The N-terminus interacts with L11 and the large rRNA to form the base of the stalk. The C-terminus forms an elongated spine to which L12 dimers bind in a sequential fashion forming a multimeric L10(L12)X complex.

Forms part of the ribosomal stalk, playing a central role in the interaction of the ribosome with GTP-bound translation factors. The protein is Large ribosomal subunit protein uL10 of Citrobacter koseri (strain ATCC BAA-895 / CDC 4225-83 / SGSC4696).